The sequence spans 428 residues: Phosphoribosylamine--glycine ligase (428 aa).

Positions 109–316 (KDFLHRHGIP…LVELCLAALD (208 aa)) constitute an ATP-grasp domain. 135–196 (LRQVGAPVVV…EEFLTGEEAS (62 aa)) is an ATP binding site. The tract at residues 211–235 (SSQDHKARDDGDRGPNTGGMGAYSP) is disordered. The segment covering 213–223 (QDHKARDDGDR) has biased composition (basic and acidic residues). 2 residues coordinate Mg(2+): glutamate 286 and asparagine 288.

The protein belongs to the GARS family. Mg(2+) serves as cofactor. It depends on Mn(2+) as a cofactor.

It carries out the reaction 5-phospho-beta-D-ribosylamine + glycine + ATP = N(1)-(5-phospho-beta-D-ribosyl)glycinamide + ADP + phosphate + H(+). It functions in the pathway purine metabolism; IMP biosynthesis via de novo pathway; N(1)-(5-phospho-D-ribosyl)glycinamide from 5-phospho-alpha-D-ribose 1-diphosphate: step 2/2. This chain is Phosphoribosylamine--glycine ligase (purD), found in Allochromatium vinosum (strain ATCC 17899 / DSM 180 / NBRC 103801 / NCIMB 10441 / D) (Chromatium vinosum).